The sequence spans 99 residues: NADH-quinone oxidoreductase subunit K (99 aa).

The next 3 membrane-spanning stretches (helical) occupy residues Pro-2–Leu-22, Leu-28–Phe-48, and Ile-60–Ile-80.

This sequence belongs to the complex I subunit 4L family. As to quaternary structure, NDH-1 is composed of 14 different subunits. Subunits NuoA, H, J, K, L, M, N constitute the membrane sector of the complex.

The protein localises to the cell inner membrane. The enzyme catalyses a quinone + NADH + 5 H(+)(in) = a quinol + NAD(+) + 4 H(+)(out). In terms of biological role, NDH-1 shuttles electrons from NADH, via FMN and iron-sulfur (Fe-S) centers, to quinones in the respiratory chain. The immediate electron acceptor for the enzyme in this species is believed to be ubiquinone. Couples the redox reaction to proton translocation (for every two electrons transferred, four hydrogen ions are translocated across the cytoplasmic membrane), and thus conserves the redox energy in a proton gradient. The protein is NADH-quinone oxidoreductase subunit K of Anaeromyxobacter dehalogenans (strain 2CP-1 / ATCC BAA-258).